The primary structure comprises 269 residues: Formamidopyrimidine-DNA glycosylase (269 aa).

The active-site Schiff-base intermediate with DNA is the P2. E3 acts as the Proton donor in catalysis. K57 serves as the catalytic Proton donor; for beta-elimination activity. DNA is bound by residues H90, R109, and R150. An FPG-type zinc finger spans residues 235–269 (QVYGKAGEQCPNCAELIQELKIGQRNTFYCSSCQV). The active-site Proton donor; for delta-elimination activity is R259.

The protein belongs to the FPG family. As to quaternary structure, monomer. Requires Zn(2+) as cofactor.

The catalysed reaction is Hydrolysis of DNA containing ring-opened 7-methylguanine residues, releasing 2,6-diamino-4-hydroxy-5-(N-methyl)formamidopyrimidine.. It carries out the reaction 2'-deoxyribonucleotide-(2'-deoxyribose 5'-phosphate)-2'-deoxyribonucleotide-DNA = a 3'-end 2'-deoxyribonucleotide-(2,3-dehydro-2,3-deoxyribose 5'-phosphate)-DNA + a 5'-end 5'-phospho-2'-deoxyribonucleoside-DNA + H(+). Involved in base excision repair of DNA damaged by oxidation or by mutagenic agents. Acts as a DNA glycosylase that recognizes and removes damaged bases. Has a preference for oxidized purines, such as 7,8-dihydro-8-oxoguanine (8-oxoG). Has AP (apurinic/apyrimidinic) lyase activity and introduces nicks in the DNA strand. Cleaves the DNA backbone by beta-delta elimination to generate a single-strand break at the site of the removed base with both 3'- and 5'-phosphates. The protein is Formamidopyrimidine-DNA glycosylase of Vibrio atlanticus (strain LGP32) (Vibrio splendidus (strain Mel32)).